We begin with the raw amino-acid sequence, 541 residues long: Membrane protein insertase YidC (541 aa).

5 helical membrane passes run F6–T26, I356–Y376, L430–V450, L463–Q483, and I498–V518.

The protein belongs to the OXA1/ALB3/YidC family. Type 1 subfamily. As to quaternary structure, interacts with the Sec translocase complex via SecD. Specifically interacts with transmembrane segments of nascent integral membrane proteins during membrane integration.

It localises to the cell inner membrane. Its function is as follows. Required for the insertion and/or proper folding and/or complex formation of integral membrane proteins into the membrane. Involved in integration of membrane proteins that insert both dependently and independently of the Sec translocase complex, as well as at least some lipoproteins. Aids folding of multispanning membrane proteins. The chain is Membrane protein insertase YidC from Vesicomyosocius okutanii subsp. Calyptogena okutanii (strain HA).